A 639-amino-acid chain; its full sequence is Threonine--tRNA ligase (639 aa).

The region spanning 1–61 is the TGS domain; the sequence is MIHITLPDGS…TADCRLSIIT (61 aa). Positions 242-533 are catalytic; it reads DHRKLGRELD…LLEQHAGALP (292 aa). The Zn(2+) site is built by C333, H384, and H510.

The protein belongs to the class-II aminoacyl-tRNA synthetase family. In terms of assembly, homodimer. It depends on Zn(2+) as a cofactor.

Its subcellular location is the cytoplasm. It catalyses the reaction tRNA(Thr) + L-threonine + ATP = L-threonyl-tRNA(Thr) + AMP + diphosphate + H(+). Its function is as follows. Catalyzes the attachment of threonine to tRNA(Thr) in a two-step reaction: L-threonine is first activated by ATP to form Thr-AMP and then transferred to the acceptor end of tRNA(Thr). Also edits incorrectly charged L-seryl-tRNA(Thr). The chain is Threonine--tRNA ligase from Verminephrobacter eiseniae (strain EF01-2).